A 100-amino-acid polypeptide reads, in one-letter code: Large ribosomal subunit protein uL23 (100 aa).

This sequence belongs to the universal ribosomal protein uL23 family. As to quaternary structure, part of the 50S ribosomal subunit. Contacts protein L29, and trigger factor when it is bound to the ribosome.

In terms of biological role, one of the early assembly proteins it binds 23S rRNA. One of the proteins that surrounds the polypeptide exit tunnel on the outside of the ribosome. Forms the main docking site for trigger factor binding to the ribosome. This Rippkaea orientalis (strain PCC 8801 / RF-1) (Cyanothece sp. (strain PCC 8801)) protein is Large ribosomal subunit protein uL23.